Consider the following 90-residue polypeptide: Conotoxin Ca8.2 (90 aa).

The first 21 residues, 1–21 (MMLKMGAMFVLLLLFILPSSQ), serve as a signal peptide directing secretion. A propeptide spanning residues 22-46 (QEGDVQARKTHLKRGFYGTLAMSTR) is cleaved from the precursor. Gln-89 bears the Glutamine amide mark.

This sequence belongs to the conotoxin S superfamily. Contains 5 disulfide bonds. As to expression, expressed by the venom duct.

It localises to the secreted. This Conus caracteristicus (Characteristic cone) protein is Conotoxin Ca8.2.